We begin with the raw amino-acid sequence, 492 residues long: Probable cytosol aminopeptidase (492 aa).

Residues K259 and D264 each contribute to the Mn(2+) site. The active site involves K271. Mn(2+) contacts are provided by D283, D342, and E344. Residue R346 is part of the active site.

The protein belongs to the peptidase M17 family. Requires Mn(2+) as cofactor.

Its subcellular location is the cytoplasm. It catalyses the reaction Release of an N-terminal amino acid, Xaa-|-Yaa-, in which Xaa is preferably Leu, but may be other amino acids including Pro although not Arg or Lys, and Yaa may be Pro. Amino acid amides and methyl esters are also readily hydrolyzed, but rates on arylamides are exceedingly low.. It carries out the reaction Release of an N-terminal amino acid, preferentially leucine, but not glutamic or aspartic acids.. Functionally, presumably involved in the processing and regular turnover of intracellular proteins. Catalyzes the removal of unsubstituted N-terminal amino acids from various peptides. This chain is Probable cytosol aminopeptidase (pepA), found in Synechocystis sp. (strain ATCC 27184 / PCC 6803 / Kazusa).